The sequence spans 292 residues: MAQEDVGHLSDAGLALGLSLGGGGGGTTDAAAAHRGGCRRPSPSSQCPPLEPSLTLSLPDDAAAGAAATATATASGGGGPAHSVSSLSVGAAAAAAVKRERAEEADGERVSSTAAGRDDDDDGSTRKKLRLTKEQSALLEDRFREHSTLNPKQKVALAKQLNLRPRQVEVWFQNRRARTKLKQTEVDCEFLKRCCETLTEENRRLQRELQELRALKFAPPPPSSAAHQPSPAPPAPFYMQLPAATLTICPSCERVGGPASAAKVVAADGTKAGPGRTTTHHFFNPFTHSAAC.

Disordered stretches follow at residues 14–85 (LALG…HSVS), 99–133 (RERA…RLTK), and 217–236 (FAPP…PPAP). Over residues 28-74 (TDAAAAHRGGCRRPSPSSQCPPLEPSLTLSLPDDAAAGAAATATATA) the composition is skewed to low complexity. Residues 99-109 (RERAEEADGER) show a composition bias toward basic and acidic residues. The segment at residues 124–183 (STRKKLRLTKEQSALLEDRFREHSTLNPKQKVALAKQLNLRPRQVEVWFQNRRARTKLKQ) is a DNA-binding region (homeobox). A leucine-zipper region spans residues 182–226 (KQTEVDCEFLKRCCETLTEENRRLQRELQELRALKFAPPPPSSAA).

Belongs to the HD-ZIP homeobox family. Class II subfamily. Expressed in seedlings, roots, stems, leaf sheaths and blades and panicles.

Its subcellular location is the nucleus. In terms of biological role, probable transcription factor. The polypeptide is Homeobox-leucine zipper protein HOX19 (HOX19) (Oryza sativa subsp. japonica (Rice)).